A 242-amino-acid polypeptide reads, in one-letter code: Small ribosomal subunit protein uS2 (242 aa).

It belongs to the universal ribosomal protein uS2 family.

In Neisseria meningitidis serogroup B (strain ATCC BAA-335 / MC58), this protein is Small ribosomal subunit protein uS2.